The sequence spans 374 residues: Probable plastid-lipid-associated protein 3, chloroplastic (374 aa).

Residues 1 to 46 constitute a chloroplast transit peptide; that stretch reads MAMPPPLFAAASHASLLLPSPTIHSSTGSRRPFRLPLRSSRRPPVA. The disordered stretch occupies residues 19 to 148; it reads PSPTIHSSTG…EDNEEERREE (130 aa). Positions 28-54 are enriched in low complexity; that stretch reads GSRRPFRLPLRSSRRPPVAAAAASGVP. 2 stretches are compositionally biased toward pro residues: residues 64-73 and 127-136; these read APEPPSQPDP and PAPPPPPPPV.

It belongs to the PAP/fibrillin family.

Its subcellular location is the plastid. It is found in the chloroplast. In Oryza sativa subsp. japonica (Rice), this protein is Probable plastid-lipid-associated protein 3, chloroplastic (PAP3).